The following is a 432-amino-acid chain: Adenosylhomocysteinase (432 aa).

Ser2 carries the post-translational modification N-acetylserine. Substrate is bound by residues Thr57, Asp131, and Glu156. Ser183 carries the post-translational modification Phosphoserine. Residues Ser183–Ala350 form an NAD binding region. Residues Lys186 and Asp190 each contribute to the substrate site. Lys186 carries the N6-(2-hydroxyisobutyryl)lysine modification. Position 193 is a phosphotyrosine (Tyr193).

Belongs to the adenosylhomocysteinase family. In terms of assembly, homotetramer. Interaction with AHCYL1. NAD(+) serves as cofactor.

It is found in the cytoplasm. The protein resides in the melanosome. Its subcellular location is the nucleus. It localises to the endoplasmic reticulum. The catalysed reaction is S-adenosyl-L-homocysteine + H2O = L-homocysteine + adenosine. It functions in the pathway amino-acid biosynthesis; L-homocysteine biosynthesis; L-homocysteine from S-adenosyl-L-homocysteine: step 1/1. In terms of biological role, catalyzes the hydrolysis of S-adenosyl-L-homocysteine to form adenosine and homocysteine. Binds copper ions. The sequence is that of Adenosylhomocysteinase (AHCY) from Bos taurus (Bovine).